A 420-amino-acid polypeptide reads, in one-letter code: 20-oxo-5-O-mycaminosyltylactone 23-monooxygenase (420 aa).

Positions 1 to 28 are disordered; the sequence is MSSSGDARPSQKGILLPAARANDTDEAA. 5 residues coordinate heme: His-118, Arg-122, Arg-311, His-367, and Cys-369.

It belongs to the cytochrome P450 family.

The enzyme catalyses 20-oxo-5-O-beta-D-mycaminosyltylonolide + 2 reduced [2Fe-2S]-[ferredoxin] + O2 + 2 H(+) = 5-O-beta-D-mycaminosyltylonolide + 2 oxidized [2Fe-2S]-[ferredoxin] + H2O. Its pathway is antibiotic biosynthesis; tylosin biosynthesis. Its function is as follows. Involved in the biosynthesis of the complex macrolide antibiotic tylosin. Catalyzes the hydroxylation of 20-oxo-5-O-beta-mycaminosyltylactone at the C-23 position to yield 5-O-beta-mycaminosyltylonolide. This is 20-oxo-5-O-mycaminosyltylactone 23-monooxygenase from Streptomyces fradiae (Streptomyces roseoflavus).